Reading from the N-terminus, the 160-residue chain is SsrA-binding protein (160 aa).

The protein belongs to the SmpB family.

Its subcellular location is the cytoplasm. In terms of biological role, required for rescue of stalled ribosomes mediated by trans-translation. Binds to transfer-messenger RNA (tmRNA), required for stable association of tmRNA with ribosomes. tmRNA and SmpB together mimic tRNA shape, replacing the anticodon stem-loop with SmpB. tmRNA is encoded by the ssrA gene; the 2 termini fold to resemble tRNA(Ala) and it encodes a 'tag peptide', a short internal open reading frame. During trans-translation Ala-aminoacylated tmRNA acts like a tRNA, entering the A-site of stalled ribosomes, displacing the stalled mRNA. The ribosome then switches to translate the ORF on the tmRNA; the nascent peptide is terminated with the 'tag peptide' encoded by the tmRNA and targeted for degradation. The ribosome is freed to recommence translation, which seems to be the essential function of trans-translation. This is SsrA-binding protein from Novosphingobium aromaticivorans (strain ATCC 700278 / DSM 12444 / CCUG 56034 / CIP 105152 / NBRC 16084 / F199).